The following is a 430-amino-acid chain: Proteasome-activating nucleotidase (430 aa).

A coiled-coil region spans residues 9–89; it reads TELKKEKKAF…LRRELDRMRV (81 aa). ATP is bound by residues 214–219 and histidine 353; that span reads GTGKTL. Residues 428-430 form a docks into pockets in the proteasome alpha-ring to cause gate opening region; sequence LYR.

The protein belongs to the AAA ATPase family. As to quaternary structure, homohexamer. The hexameric complex has a two-ring architecture resembling a top hat that caps the 20S proteasome core at one or both ends. Alone, can form a complex composed of two stacked hexameric rings in vitro. Upon ATP-binding, the C-terminus of PAN interacts with the alpha-rings of the proteasome core by binding to the intersubunit pockets.

The protein localises to the cytoplasm. Its activity is regulated as follows. ATPase activity is inhibited by EDTA, N-ethylmaleimide (NEM) and p-chloromercuriphenyl-sulfonic acid (PCMS) in vitro. ATPase which is responsible for recognizing, binding, unfolding and translocation of substrate proteins into the archaeal 20S proteasome core particle. Is essential for opening the gate of the 20S proteasome via an interaction with its C-terminus, thereby allowing substrate entry and access to the site of proteolysis. Thus, the C-termini of the proteasomal ATPase function like a 'key in a lock' to induce gate opening and therefore regulate proteolysis. Unfolding activity requires energy from ATP hydrolysis, whereas ATP binding alone promotes ATPase-20S proteasome association which triggers gate opening, and supports translocation of unfolded substrates. In addition to ATP, is able to cleave other nucleotide triphosphates such as CTP, GTP and UTP, but hydrolysis of these other nucleotides is less effective in promoting proteolysis than ATP. Moreover, PAN by itself can function as a chaperone in vitro. The chain is Proteasome-activating nucleotidase from Methanocaldococcus jannaschii (strain ATCC 43067 / DSM 2661 / JAL-1 / JCM 10045 / NBRC 100440) (Methanococcus jannaschii).